We begin with the raw amino-acid sequence, 383 residues long: Glutaminyl-peptide cyclotransferase-like protein (383 aa).

The interval 1-25 is disordered; it reads MPSGGRGRPRLQVGERSLLERPSPP. The helical transmembrane segment at 35–57 threads the bilayer; it reads LLPQLLLALTVASVFYTIWRIWH. Cysteine 168 and cysteine 192 are joined by a disulfide. Aspartate 187 lines the Zn(2+) pocket. Catalysis depends on glutamate 226, which acts as the Proton acceptor. Glutamate 227 is a binding site for Zn(2+). The Proton acceptor role is filled by aspartate 270. Histidine 352 contributes to the Zn(2+) binding site.

Belongs to the glutaminyl-peptide cyclotransferase family.

The protein localises to the golgi apparatus membrane. It carries out the reaction N-terminal L-glutaminyl-[peptide] = N-terminal 5-oxo-L-prolyl-[peptide] + NH4(+). Its function is as follows. Responsible for the biosynthesis of pyroglutamyl peptides. This Bos taurus (Bovine) protein is Glutaminyl-peptide cyclotransferase-like protein (QPCTL).